A 336-amino-acid polypeptide reads, in one-letter code: MAVDKEVELHAQAWDHALSYITPTALSAAVELEIPDILEDHGGLMSLSELSAASGCPREPLYRLMRFLIFHGIFTKSNDCYAQSPLSRVFTRENLGPYMLMQATPVTRSPAGLSGEALKTGTPLYLKSIRGEDSWNDPAYGFHMRAFTNGMAAHARLTAAAIVTNYPTAFNGVRSVVDVGGRHGMAIGKLVEAFPWVRGIAFDLPEVVADAPPRKGVDFVGGDMFESLPKADAVMLMWVLHDWSDDKCIEILKKCKEAIPTSTGKVMIVDAIINEEGEGDEFSGARLSLDMTMMAMTTQGKERSYKEWVHLLNEAGFSKHTVKNIKTIEFVIEAYP.

S-adenosyl-L-methionine contacts are provided by tyrosine 140 and aspartate 203. The active-site Proton acceptor is the histidine 241.

It belongs to the class I-like SAM-binding methyltransferase superfamily. Cation-independent O-methyltransferase family. As to quaternary structure, homodimer. In terms of tissue distribution, expressed in leaves.

The enzyme catalyses ladanein + S-adenosyl-L-methionine = salvigenin + S-adenosyl-L-homocysteine + H(+). It carries out the reaction scutellarein 7-methyl ether + S-adenosyl-L-methionine = cirsimaritin + S-adenosyl-L-homocysteine + H(+). Its pathway is flavonoid metabolism. In terms of biological role, flavonoid 6-O-methyltransferase involved in the biosynthesis of polymethoxylated flavonoids natural products such as nevadensin and salvigenin (SALV), aroma compounds which contribute to the flavor of sweet basil, and exhibit pharmacological activities such as anti-allergic, anti-oxidant, antibacterial, anti-proliferative, and anti-inflammatory effects. Catalyzes S-adenosylmethionine-dependent regioselective 6-O-methylation of flavonoids; active on various hydroxylated flavonoid substrates, including scutellarein-7-methyl ether (SCU7Me) and ladanein (LAD). The sequence is that of Flavonoid 6-O-methyltransferase 4 from Ocimum basilicum (Sweet basil).